A 450-amino-acid chain; its full sequence is Cyclin-A2-3 (450 aa).

2 disordered regions span residues 18–53 (ALRASEVTSTTQNQQRVNTKRPALEDTRATGPNKRK) and 75–94 (NSKQIKKGRGHGLASTSQLA). Over residues 23-34 (EVTSTTQNQQRV) the composition is skewed to polar residues.

Belongs to the cyclin family. Cyclin AB subfamily. As to quaternary structure, interacts with CDKA-1. Interacts with SAMBA.

Its subcellular location is the nucleus. In terms of biological role, negatively regulates endocycles and acts as a regulator of ploidy levels in endoreduplication. Promotes divisions in the guard cells (GCs) after the guard mother cells (GMC) symmetric division. This Arabidopsis thaliana (Mouse-ear cress) protein is Cyclin-A2-3 (CYCA2-3).